Here is a 33-residue protein sequence, read N- to C-terminus: Suppressor protein HFN40 (33 aa).

In terms of biological role, suppresses expansion of husk leaf blades. The protein is Suppressor protein HFN40 of Zea mays (Maize).